Here is a 706-residue protein sequence, read N- to C-terminus: Polyribonucleotide nucleotidyltransferase (706 aa).

Mg(2+)-binding residues include Asp-490 and Asp-496. The region spanning Pro-556–Ile-615 is the KH domain. The S1 motif domain maps to Gly-625–Lys-693.

The protein belongs to the polyribonucleotide nucleotidyltransferase family. The cofactor is Mg(2+).

The protein resides in the cytoplasm. It catalyses the reaction RNA(n+1) + phosphate = RNA(n) + a ribonucleoside 5'-diphosphate. Its function is as follows. Involved in mRNA degradation. Catalyzes the phosphorolysis of single-stranded polyribonucleotides processively in the 3'- to 5'-direction. The sequence is that of Polyribonucleotide nucleotidyltransferase from Jannaschia sp. (strain CCS1).